We begin with the raw amino-acid sequence, 339 residues long: NADP-dependent dehydrogenase M3 (339 aa).

The NADP(+) site is built by Ser-49, Ile-51, Asp-93, Tyr-206, Lys-210, Ile-240, and Gln-244. Tyr-206 (proton acceptor) is an active-site residue. The active-site Lowers pKa of active site Tyr is Lys-210.

It belongs to the short-chain dehydrogenases/reductases (SDR) family. As to quaternary structure, homodimer.

The protein resides in the cytoplasm. It is found in the cytosol. Its pathway is secondary metabolite biosynthesis. Functionally, NADP-dependent dehydrogenase; part of the gene cluster that mediates the biosynthesis of squalestatin S1 (SQS1, also known as zaragozic acid A), a heavily oxidized fungal polyketide that offers potent cholesterol lowering activity by targeting squalene synthase (SS). SQS1 is composed of a 2,8-dioxobicyclic[3.2.1]octane-3,4,5-tricarboxyclic acid core that is connected to two lipophilic polyketide arms. These initial steps feature the priming of an unusual benzoic acid starter unit onto the highly reducing polyketide synthase pks2, followed by oxaloacetate extension and product release to generate a tricarboxylic acid containing product. The phenylalanine ammonia lyase (PAL) M7 and the acyl-CoA ligase M9 are involved in transforming phenylalanine into benzoyl-CoA. The citrate synthase-like protein R3 is involved in connecting the C-alpha-carbons of the hexaketide chain and oxaloacetate to afford the tricarboxylic acid unit. The potential hydrolytic enzymes, M8 and M10, are in close proximity to pks2 and may participate in product release. On the other side, the tetraketide arm is synthesized by a the squalestatin tetraketide synthase pks1 and enzymatically esterified to the core in the last biosynthetic step, by the acetyltransferase M4. The biosynthesis of the tetraketide must involve 3 rounds of chain extension. After the first and second rounds methyl-transfer occurs, and in all rounds of extension the ketoreductase and dehydratase are active. The enoyl reductase and C-MeT of pks1 are not active in the final round of extension. The acetyltransferase M4 appears to have a broad substrate selectivity for its acyl CoA substrate, allowing the in vitro synthesis of novel squalestatins. The biosynthesis of SQS1 requires several oxidative steps likely performed by oxidoreductases M1, R1 and R2. Finally, in support of the identification of the cluster as being responsible for SQS1 production, the cluster contains a gene encoding a putative squalene synthase (SS) R6, suggesting a likely mechanism for self-resistance. In Phoma sp. (strain ATCC 20986 / MF5453), this protein is NADP-dependent dehydrogenase M3.